The sequence spans 453 residues: MEIKGKKILVVGLARTGVAVARFLASRGAKVTVTDMKEESELADYLLQLEDLDLNLELGRHDKHTFLMSDLIVVSPGVPMDISPLLMAKAQRRVVISEIELAAAFIKAPMVAITGTNGKTTTTTLAGEIFKACGVETFVGGNIGNPLIELVTSGNDVAQVVVELSSFQLEGIQRFRPKVAVLLNITEDHLDRYASYQDYIDAKLRIFENQTVDDFAVLNVDDPLVAACAATVKSRVFPFSQRKELAEGIFCSKGIIVYRWQGSELRFDTAAFKLKGVHNIENIMAALASTLLSGADPIKAGRAVESFKGLRHRMEFIREVGGVAYYEDSKGTNVGSVVKSLESFDKGITLIAGGKDKGGSYAPLADLVRERVKHLILIGEAKERIEAELGNLTDTHKAATLEDAVAIAHRLAKAGEVVLFSPACSSFDMFKDYAERAERFNAAVRALAGGDCR.

115–121 serves as a coordination point for ATP; it reads GTNGKTT.

It belongs to the MurCDEF family.

The protein resides in the cytoplasm. The catalysed reaction is UDP-N-acetyl-alpha-D-muramoyl-L-alanine + D-glutamate + ATP = UDP-N-acetyl-alpha-D-muramoyl-L-alanyl-D-glutamate + ADP + phosphate + H(+). It participates in cell wall biogenesis; peptidoglycan biosynthesis. In terms of biological role, cell wall formation. Catalyzes the addition of glutamate to the nucleotide precursor UDP-N-acetylmuramoyl-L-alanine (UMA). The protein is UDP-N-acetylmuramoylalanine--D-glutamate ligase of Geotalea daltonii (strain DSM 22248 / JCM 15807 / FRC-32) (Geobacter daltonii).